We begin with the raw amino-acid sequence, 158 residues long: NADPH-dependent 7-cyano-7-deazaguanine reductase (158 aa).

Residues 1–37 (MAKRSIKSETSPELQLGRPVTAPDSPETARLDRVPNP) are disordered. Residues 27 to 37 (ETARLDRVPNP) show a composition bias toward basic and acidic residues. Catalysis depends on cysteine 56, which acts as the Thioimide intermediate. The Proton donor role is filled by aspartate 63. Substrate contacts are provided by residues 78 to 80 (VES) and 97 to 98 (HE).

It belongs to the GTP cyclohydrolase I family. QueF type 1 subfamily.

It is found in the cytoplasm. The catalysed reaction is 7-aminomethyl-7-carbaguanine + 2 NADP(+) = 7-cyano-7-deazaguanine + 2 NADPH + 3 H(+). It participates in tRNA modification; tRNA-queuosine biosynthesis. Functionally, catalyzes the NADPH-dependent reduction of 7-cyano-7-deazaguanine (preQ0) to 7-aminomethyl-7-deazaguanine (preQ1). The sequence is that of NADPH-dependent 7-cyano-7-deazaguanine reductase from Bradyrhizobium sp. (strain BTAi1 / ATCC BAA-1182).